The sequence spans 310 residues: Acetylglutamate kinase (310 aa).

Substrate-binding positions include 74–75 (GG), Arg-96, and Asn-201.

Belongs to the acetylglutamate kinase family. ArgB subfamily.

The protein resides in the cytoplasm. It catalyses the reaction N-acetyl-L-glutamate + ATP = N-acetyl-L-glutamyl 5-phosphate + ADP. It participates in amino-acid biosynthesis; L-arginine biosynthesis; N(2)-acetyl-L-ornithine from L-glutamate: step 2/4. Its function is as follows. Catalyzes the ATP-dependent phosphorylation of N-acetyl-L-glutamate. This Arthrobacter sp. (strain FB24) protein is Acetylglutamate kinase.